A 272-amino-acid polypeptide reads, in one-letter code: Imidazole glycerol phosphate synthase subunit HisF (272 aa).

Catalysis depends on residues Asp-11 and Asp-130.

This sequence belongs to the HisA/HisF family. Heterodimer of HisH and HisF.

It localises to the cytoplasm. The enzyme catalyses 5-[(5-phospho-1-deoxy-D-ribulos-1-ylimino)methylamino]-1-(5-phospho-beta-D-ribosyl)imidazole-4-carboxamide + L-glutamine = D-erythro-1-(imidazol-4-yl)glycerol 3-phosphate + 5-amino-1-(5-phospho-beta-D-ribosyl)imidazole-4-carboxamide + L-glutamate + H(+). The protein operates within amino-acid biosynthesis; L-histidine biosynthesis; L-histidine from 5-phospho-alpha-D-ribose 1-diphosphate: step 5/9. IGPS catalyzes the conversion of PRFAR and glutamine to IGP, AICAR and glutamate. The HisF subunit catalyzes the cyclization activity that produces IGP and AICAR from PRFAR using the ammonia provided by the HisH subunit. The sequence is that of Imidazole glycerol phosphate synthase subunit HisF from Methanococcus maripaludis (strain C6 / ATCC BAA-1332).